The sequence spans 463 residues: L-cystine uptake protein TcyP (463 aa).

10 helical membrane passes run 3-23 (TLLV…LFVM), 34-54 (VFTA…IYGP), 73-93 (YVKL…LGAF), 105-125 (ISGL…AVGI), 184-204 (PTST…FLGV), 225-245 (IVMR…LAIM), 262-282 (MFVI…LLLL), 338-358 (LSIG…MMIA), 369-389 (VFII…AGVG), and 394-414 (FAAL…GLLI).

This sequence belongs to the dicarboxylate/amino acid:cation symporter (DAACS) (TC 2.A.23) family.

It localises to the cell membrane. Its function is as follows. Mediates uptake of L-cystine, the oxidized form of L-cysteine. Although it is more specific for L-cystine, it could also transport a much broader range of amino acids and sulfur compounds including S-methylcysteine. The polypeptide is L-cystine uptake protein TcyP (tcyP) (Bacillus subtilis (strain 168)).